The following is a 210-amino-acid chain: Ribosomal RNA small subunit methyltransferase G (210 aa).

Residues Gly-76, Met-81, 127-128 (VE), and Arg-145 each bind S-adenosyl-L-methionine.

It belongs to the methyltransferase superfamily. RNA methyltransferase RsmG family.

It is found in the cytoplasm. It catalyses the reaction guanosine(527) in 16S rRNA + S-adenosyl-L-methionine = N(7)-methylguanosine(527) in 16S rRNA + S-adenosyl-L-homocysteine. Its function is as follows. Specifically methylates the N7 position of guanine in position 527 of 16S rRNA. The protein is Ribosomal RNA small subunit methyltransferase G of Acinetobacter baumannii (strain AB307-0294).